The sequence spans 447 residues: Probable glycine dehydrogenase (decarboxylating) subunit 1 (447 aa).

It belongs to the GcvP family. N-terminal subunit subfamily. In terms of assembly, the glycine cleavage system is composed of four proteins: P, T, L and H. In this organism, the P 'protein' is a heterodimer of two subunits.

It carries out the reaction N(6)-[(R)-lipoyl]-L-lysyl-[glycine-cleavage complex H protein] + glycine + H(+) = N(6)-[(R)-S(8)-aminomethyldihydrolipoyl]-L-lysyl-[glycine-cleavage complex H protein] + CO2. Functionally, the glycine cleavage system catalyzes the degradation of glycine. The P protein binds the alpha-amino group of glycine through its pyridoxal phosphate cofactor; CO(2) is released and the remaining methylamine moiety is then transferred to the lipoamide cofactor of the H protein. The chain is Probable glycine dehydrogenase (decarboxylating) subunit 1 from Beijerinckia indica subsp. indica (strain ATCC 9039 / DSM 1715 / NCIMB 8712).